We begin with the raw amino-acid sequence, 615 residues long: Fibrinogen alpha chain (615 aa).

The first 19 residues, 1-19 (MFSVRDLCLVLSLVGAIKT), serve as a signal peptide directing secretion. Residues 71–602 (CRMKGLIDEV…GHTKARPARG (532 aa)) adopt a coiled-coil conformation. Positions 267-427 (FGGDGHARGD…TKQEFHTGKL (161 aa)) are disordered. A compositionally biased stretch (polar residues) spans 293-302 (GTSSIGNVNP). Thr-325 is a glycosylation site (O-linked (GalNAc...) threonine). Over residues 373–396 (GSAGTWNTGSSGSSSFRPDSSGHG) the composition is skewed to low complexity. Residues Cys-455 and Cys-485 are joined by a disulfide bond. The interval 530 to 615 (EFAALGESGS…SPLGEPSLTP (86 aa)) is disordered. Over residues 537-549 (SGSSSSKTSTHSK) the composition is skewed to low complexity. Polar residues predominate over residues 550 to 560 (QFVSSSTTVNR). Basic residues predominate over residues 591 to 601 (QKGHTKARPAR).

As to quaternary structure, heterohexamer; disulfide linked. Contains 2 sets of 3 non-identical chains (alpha, beta and gamma). The 2 heterotrimers are in head to head conformation with the N-termini in a small central domain. Post-translationally, conversion of fibrinogen to fibrin is triggered by thrombin, which cleaves fibrinopeptides A and B from alpha and beta chains, and thus exposes the N-terminal polymerization sites responsible for the formation of the soft clot. The soft clot is converted into the hard clot by factor XIIIA which catalyzes the epsilon-(gamma-glutamyl)lysine cross-linking between gamma chains (stronger) and between alpha chains (weaker) of different monomers. In terms of processing, forms F13A-mediated cross-links between a glutamine and the epsilon-amino group of a lysine residue, forming fibronectin-fibrinogen heteropolymers.

It is found in the secreted. Cleaved by the protease thrombin to yield monomers which, together with fibrinogen beta (FGB) and fibrinogen gamma (FGG), polymerize to form an insoluble fibrin matrix. Fibrin has a major function in hemostasis as one of the primary components of blood clots. In addition, functions during the early stages of wound repair to stabilize the lesion and guide cell migration during re-epithelialization. Was originally thought to be essential for platelet aggregation, based on in vitro studies using anticoagulated blood. However, subsequent studies have shown that it is not absolutely required for thrombus formation in vivo. Enhances expression of SELP in activated platelets via an ITGB3-dependent pathway. Maternal fibrinogen is essential for successful pregnancy. Fibrin deposition is also associated with infection, where it protects against IFNG-mediated hemorrhage. May also facilitate the immune response via both innate and T-cell mediated pathways. This is Fibrinogen alpha chain (FGA) from Bos taurus (Bovine).